An 823-amino-acid chain; its full sequence is Adhesion G protein-coupled receptor E2 (823 aa).

An N-terminal signal peptide occupies residues 1-23 (MGGRVFLVFLAFCVWLTLPGAET). The Extracellular segment spans residues 24-540 (QDSRGCARWC…EEDPVLTVIT (517 aa)). The 42-residue stretch at 25-66 (DSRGCARWCPQDSSCVNATACRCNPGFSSFSEIITTPMETCD) folds into the EGF-like 1 domain. 15 cysteine pairs are disulfide-bonded: Cys29-Cys39, Cys33-Cys45, Cys47-Cys65, Cys71-Cys85, Cys79-Cys94, Cys96-Cys117, Cys123-Cys136, Cys130-Cys145, Cys147-Cys161, Cys167-Cys180, Cys174-Cys189, Cys191-Cys210, Cys216-Cys229, Cys223-Cys238, and Cys240-Cys259. The N-linked (GlcNAc...) asparagine glycan is linked to Asn41. The EGF-like 2; calcium-binding domain maps to 67–118 (DINECATLSKVSCGKFSDCWNTEGSYDCVCSPGYEPVSGAKTFKNESENTCQ). Asn111 is a glycosylation site (N-linked (GlcNAc...) asparagine). Residues 119 to 162 (DVDECQQNPRLCKSYGTCVNTLGSYTCQCLPGFKLKPEDPKLCT) form the EGF-like 3; calcium-binding domain. Residues 163-211 (DVNECTSGQNPCHSSTHCLNNVGSYQCRCRPGWQPIPGSPNGPNNTVCE) enclose the EGF-like 4; calcium-binding domain. A glycan (N-linked (GlcNAc...) asparagine) is linked at Asn206. An EGF-like 5; calcium-binding domain is found at 212–260 (DVDECSSGQHQCDSSTVCFNTVGSYSCRCRPGWKPRHGIPNNQKDTVCE). Residues Asn298, Asn347, Asn354, Asn456, and Asn460 are each glycosylated (N-linked (GlcNAc...) asparagine). The 177-residue stretch at 354 to 530 (NFSYPAGTEL…AVLMAHYDVQ (177 aa)) folds into the GAIN-B domain. Disulfide bonds link Cys482–Cys512 and Cys500–Cys514. The segment at 482 to 530 (CVFWEHGQNGCGHWATTGCSTIGTRDTSTICRCTHLSSFAVLMAHYDVQ) is GPS. A helical membrane pass occupies residues 541 to 561 (YMGLSVSLLCLLLAALTFLLC). Topologically, residues 562–569 (KAIQNTST) are cytoplasmic. A helical membrane pass occupies residues 570–590 (SLHLQLSLCLFLAHLLFLVAI). Residues 591–605 (DQTGHKVLCSIIAGT) are Extracellular-facing. The chain crosses the membrane as a helical span at residues 606-626 (LHYLYLATLTWMLLEALYLFL). The Cytoplasmic segment spans residues 627-644 (TARNLTVVNYSSINRFMK). A helical transmembrane segment spans residues 645–665 (KLMFPVGYGVPAVTVAISAAS). Residues 666-683 (RPHLYGTPSRCWLQPEKG) lie on the Extracellular side of the membrane. The chain crosses the membrane as a helical span at residues 684-704 (FIWGFLGPVCAIFSVNLVLFL). At 705 to 735 (VTLWILKNRLSSLNSEVSTLRNTRMLAFKAT) the chain is on the cytoplasmic side. A helical transmembrane segment spans residues 736 to 756 (AQLFILGCTWCLGILQVGPAA). Residues 757–760 (RVMA) lie on the Extracellular side of the membrane. A helical membrane pass occupies residues 761–781 (YLFTIINSLQGVFIFLVYCLL). Topologically, residues 782 to 823 (SQQVREQYGKWSKGIRKLKTESEMHTLSSSAKADTSKPSTVN) are cytoplasmic.

This sequence belongs to the G-protein coupled receptor 2 family. Adhesion G-protein coupled receptor (ADGR) subfamily. In terms of assembly, forms a heterodimer, consisting of a large extracellular region non-covalently linked to a seven-transmembrane moiety. Interacts with chondroitin sulfate; the interaction with chondroitin sulfate is calcium-dependent. Interacts with CD55. Post-translationally, autoproteolytically cleaved into 2 subunits, an extracellular alpha subunit and a seven-transmembrane beta subunit. As to expression, expression is restricted to myeloid cells. Highest expression was found in peripheral blood leukocytes, followed by spleen and lymph nodes, with intermediate to low levels in thymus, bone marrow, fetal liver, placenta, and lung, and no expression in heart, brain, skeletal muscle, kidney, or pancreas. Expression is also detected in monocyte/macrophage and Jurkat cell lines but not in other cell lines tested. High expression in mast cells.

The protein localises to the cell membrane. Its subcellular location is the cell projection. It is found in the ruffle membrane. Functionally, cell surface receptor that binds to the chondroitin sulfate moiety of glycosaminoglycan chains and promotes cell attachment. Promotes granulocyte chemotaxis, degranulation and adhesion. In macrophages, promotes the release of inflammatory cytokines, including IL8 and TNF. Signals probably through G-proteins. Is a regulator of mast cell degranulation. This chain is Adhesion G protein-coupled receptor E2, found in Homo sapiens (Human).